Here is a 354-residue protein sequence, read N- to C-terminus: Uroporphyrinogen decarboxylase (354 aa).

Substrate is bound by residues 27–31 (RQAGR), aspartate 77, tyrosine 154, threonine 209, and histidine 327.

Belongs to the uroporphyrinogen decarboxylase family. Homodimer.

It is found in the cytoplasm. The enzyme catalyses uroporphyrinogen III + 4 H(+) = coproporphyrinogen III + 4 CO2. It participates in porphyrin-containing compound metabolism; protoporphyrin-IX biosynthesis; coproporphyrinogen-III from 5-aminolevulinate: step 4/4. Functionally, catalyzes the decarboxylation of four acetate groups of uroporphyrinogen-III to yield coproporphyrinogen-III. The chain is Uroporphyrinogen decarboxylase from Shigella flexneri serotype 5b (strain 8401).